Here is a 244-residue protein sequence, read N- to C-terminus: NAD(P)H-quinone oxidoreductase subunit K (244 aa).

The [4Fe-4S] cluster site is built by Cys60, Cys61, Cys125, and Cys156. The segment at 213 to 244 (TSANSIPSSKKEKITELPDNNEKAEIIDTLEN) is disordered. The span at 221–238 (SKKEKITELPDNNEKAEI) shows a compositional bias: basic and acidic residues.

The protein belongs to the complex I 20 kDa subunit family. NDH-1 can be composed of about 15 different subunits; different subcomplexes with different compositions have been identified which probably have different functions. It depends on [4Fe-4S] cluster as a cofactor.

Its subcellular location is the cellular thylakoid membrane. It carries out the reaction a plastoquinone + NADH + (n+1) H(+)(in) = a plastoquinol + NAD(+) + n H(+)(out). The catalysed reaction is a plastoquinone + NADPH + (n+1) H(+)(in) = a plastoquinol + NADP(+) + n H(+)(out). Functionally, NDH-1 shuttles electrons from an unknown electron donor, via FMN and iron-sulfur (Fe-S) centers, to quinones in the respiratory and/or the photosynthetic chain. The immediate electron acceptor for the enzyme in this species is believed to be plastoquinone. Couples the redox reaction to proton translocation, and thus conserves the redox energy in a proton gradient. Cyanobacterial NDH-1 also plays a role in inorganic carbon-concentration. This chain is NAD(P)H-quinone oxidoreductase subunit K, found in Prochlorococcus marinus (strain MIT 9301).